Reading from the N-terminus, the 412-residue chain is Short-chain specific acyl-CoA dehydrogenase, mitochondrial (412 aa).

The N-terminal 24 residues, 1-24 (MAATLLARACGLVRGAPWPWGWRR), are a transit peptide targeting the mitochondrion. Thr-27 carries the phosphothreonine modification. Lys-51 is modified (N6-acetyllysine; alternate). Position 51 is an N6-succinyllysine; alternate (Lys-51). Residue Lys-72 is modified to N6-acetyllysine. Lys-129 is subject to N6-acetyllysine; alternate. Lys-129 carries the N6-succinyllysine; alternate modification. FAD-binding positions include 152–161 (FALSEPGNGS) and 185–187 (WIT). Ser-161 contributes to the substrate binding site. An N6-acetyllysine modification is found at Lys-208. Position 262 is an N6-acetyllysine; alternate (Lys-262). Lys-262 is modified (N6-succinyllysine; alternate). Substrate is bound at residue 269 to 272 (DTGR). Arg-297 serves as a coordination point for FAD. An N6-acetyllysine; alternate modification is found at Lys-306. Lys-306 carries the post-translational modification N6-succinyllysine; alternate. FAD contacts are provided by residues Gln-308 and 365–369 (QILGG). Glu-392 (proton acceptor) is an active-site residue. Residue Gly-393 participates in substrate binding. 394–396 (TSE) contributes to the FAD binding site.

Belongs to the acyl-CoA dehydrogenase family. Homotetramer. Requires FAD as cofactor.

It is found in the mitochondrion matrix. It catalyses the reaction a short-chain 2,3-saturated fatty acyl-CoA + oxidized [electron-transfer flavoprotein] + H(+) = a short-chain (2E)-enoyl-CoA + reduced [electron-transfer flavoprotein]. The enzyme catalyses butanoyl-CoA + oxidized [electron-transfer flavoprotein] + H(+) = (2E)-butenoyl-CoA + reduced [electron-transfer flavoprotein]. The catalysed reaction is pentanoyl-CoA + oxidized [electron-transfer flavoprotein] + H(+) = (2E)-pentenoyl-CoA + reduced [electron-transfer flavoprotein]. It carries out the reaction hexanoyl-CoA + oxidized [electron-transfer flavoprotein] + H(+) = (2E)-hexenoyl-CoA + reduced [electron-transfer flavoprotein]. It functions in the pathway lipid metabolism; mitochondrial fatty acid beta-oxidation. Its function is as follows. Short-chain specific acyl-CoA dehydrogenase is one of the acyl-CoA dehydrogenases that catalyze the first step of mitochondrial fatty acid beta-oxidation, an aerobic process breaking down fatty acids into acetyl-CoA and allowing the production of energy from fats. The first step of fatty acid beta-oxidation consists in the removal of one hydrogen from C-2 and C-3 of the straight-chain fatty acyl-CoA thioester, resulting in the formation of trans-2-enoyl-CoA. Among the different mitochondrial acyl-CoA dehydrogenases, short-chain specific acyl-CoA dehydrogenase acts specifically on acyl-CoAs with saturated 4 to 6 carbons long primary chains. This is Short-chain specific acyl-CoA dehydrogenase, mitochondrial (ACADS) from Bos taurus (Bovine).